A 353-amino-acid chain; its full sequence is Green-sensitive opsin-2 (353 aa).

Topologically, residues Met-1–Val-47 are extracellular. Asn-29 carries an N-linked (GlcNAc...) asparagine glycan. The chain crosses the membrane as a helical span at residues Tyr-48 to Ala-72. Residues Thr-73–Asn-84 lie on the Cytoplasmic side of the membrane. A helical transmembrane segment spans residues Trp-85 to Ile-110. Over Phe-111–Glu-124 the chain is Extracellular. The cysteines at positions 121 and 198 are disulfide-linked. A helical membrane pass occupies residues Gly-125–Trp-144. At Glu-145–Trp-163 the chain is on the cytoplasmic side. A helical transmembrane segment spans residues Ala-164–Ser-187. Topologically, residues Arg-188–Ser-213 are extracellular. A helical transmembrane segment spans residues Tyr-214–Ile-241. Over His-242 to Arg-263 the chain is Cytoplasmic. Residues Met-264–Ala-287 form a helical membrane-spanning segment. The Extracellular segment spans residues Val-288 to His-295. Residues Pro-296–Met-320 traverse the membrane as a helical segment. N6-(retinylidene)lysine is present on Lys-307. Residues Asn-321–Ser-353 lie on the Cytoplasmic side of the membrane.

It belongs to the G-protein coupled receptor 1 family. Opsin subfamily. In terms of tissue distribution, the color pigments are found in the cone photoreceptor cells.

Its subcellular location is the membrane. Its function is as follows. Visual pigments are the light-absorbing molecules that mediate vision. They consist of an apoprotein, opsin, covalently linked to cis-retinal. The polypeptide is Green-sensitive opsin-2 (G101) (Psalidodon fasciatus (Banded astyanax)).